A 376-amino-acid polypeptide reads, in one-letter code: Flagellin B (376 aa).

A coiled-coil region spans residues 103–129 (SNSSSERRAIQEEVSALNDELNRIAET).

Belongs to the bacterial flagellin family. As to quaternary structure, heteromer of multiple flagellin subunits including FlaA, FlaB, FlaC, FlaD and FlaE.

Its subcellular location is the secreted. The protein localises to the bacterial flagellum. Flagellin is the subunit protein which polymerizes to form the filaments of bacterial flagella. FlaB is not essential for flagellar synthesis and motility. The polypeptide is Flagellin B (flaB) (Vibrio cholerae serotype O1 (strain ATCC 39541 / Classical Ogawa 395 / O395)).